Reading from the N-terminus, the 138-residue chain is Acidic phospholipase A2 VpaPLA2 (138 aa).

The first 16 residues, 1–16 (MRTLWIVAVCLMGVEG), serve as a signal peptide directing secretion. 7 cysteine pairs are disulfide-bonded: C42-C131, C44-C60, C59-C111, C65-C138, C66-C104, C73-C97, and C91-C102. Positions 43, 45, and 47 each coordinate Ca(2+). The active site involves H63. D64 lines the Ca(2+) pocket. D105 is an active-site residue.

The protein belongs to the phospholipase A2 family. Group II subfamily. D49 sub-subfamily. The cofactor is Ca(2+). As to expression, expressed by the venom gland.

It localises to the secreted. The catalysed reaction is a 1,2-diacyl-sn-glycero-3-phosphocholine + H2O = a 1-acyl-sn-glycero-3-phosphocholine + a fatty acid + H(+). Its function is as follows. Snake venom phospholipase A2 (PLA2) that causes a sudden decrease of arterial blood pressure when injected into rat, but is not lethal. When co-injected with an uncharacterized basic protein (which did not show any enzymatic activity, but also causes a drop in blood pressure), this synergistical mixture is lethal. PLA2 catalyzes the calcium-dependent hydrolysis of the 2-acyl groups in 3-sn-phosphoglycerides. The protein is Acidic phospholipase A2 VpaPLA2 of Daboia palaestinae (Palestine viper).